We begin with the raw amino-acid sequence, 91 residues long: Soluble cytochrome b558 (91 aa).

The 81-residue stretch at 8–88 (LPVFTLEQVA…LQRYLIGTLE (81 aa)) folds into the Cytochrome b5 heme-binding domain. Residues Cys25 and Cys54 are joined by a disulfide bond. 2 residues coordinate heme: His43 and His71.

The sequence is that of Soluble cytochrome b558 from Ectothiorhodospira shaposhnikovii (Ectothiorhodospira vacuolata).